Consider the following 217-residue polypeptide: Growth hormone variant (217 aa).

An N-terminal signal peptide occupies residues 1–26; sequence MAAGSWTCLILAIALLCLPWLQEGSA. Cystine bridges form between cysteine 79-cysteine 191 and cysteine 208-cysteine 215. A phosphoserine mark is found at serine 132 and serine 176.

It belongs to the somatotropin/prolactin family. As to expression, expressed in the placenta.

The protein resides in the secreted. In terms of biological role, plays an important role in growth control. Its major role in stimulating body growth is to stimulate the liver and other tissues to secrete IGF1. It stimulates both the differentiation and proliferation of myoblasts. It also stimulates amino acid uptake and protein synthesis in muscle and other tissues. The polypeptide is Growth hormone variant (GH2) (Macaca mulatta (Rhesus macaque)).